A 205-amino-acid chain; its full sequence is Holliday junction branch migration complex subunit RuvA (205 aa).

Positions 1 to 64 (MIGRLRGTLA…EDAHLLYGFH (64 aa)) are domain I. Positions 65 to 143 (EKRERELFRE…AWETSPAMFT (79 aa)) are domain II. A flexible linker region spans residues 144 to 153 (LVSDGPVPVS). A domain III region spans residues 154–205 (GASTAEADAVSALVSLGYKPQEASKAVSAIKDKAGLSSEELIRRSLKGMITK).

Belongs to the RuvA family. In terms of assembly, homotetramer. Forms an RuvA(8)-RuvB(12)-Holliday junction (HJ) complex. HJ DNA is sandwiched between 2 RuvA tetramers; dsDNA enters through RuvA and exits via RuvB. An RuvB hexamer assembles on each DNA strand where it exits the tetramer. Each RuvB hexamer is contacted by two RuvA subunits (via domain III) on 2 adjacent RuvB subunits; this complex drives branch migration. In the full resolvosome a probable DNA-RuvA(4)-RuvB(12)-RuvC(2) complex forms which resolves the HJ.

Its subcellular location is the cytoplasm. The RuvA-RuvB-RuvC complex processes Holliday junction (HJ) DNA during genetic recombination and DNA repair, while the RuvA-RuvB complex plays an important role in the rescue of blocked DNA replication forks via replication fork reversal (RFR). RuvA specifically binds to HJ cruciform DNA, conferring on it an open structure. The RuvB hexamer acts as an ATP-dependent pump, pulling dsDNA into and through the RuvAB complex. HJ branch migration allows RuvC to scan DNA until it finds its consensus sequence, where it cleaves and resolves the cruciform DNA. The sequence is that of Holliday junction branch migration complex subunit RuvA from Pseudomonas putida (strain W619).